Here is a 168-residue protein sequence, read N- to C-terminus: Pleiotrophin (168 aa).

Residues 1-32 (MSSQQYQQQRRKFAAAFLALIFILAAVDTAEA) form the signal peptide. Disulfide bonds link Cys47-Cys76, Cys55-Cys85, Cys62-Cys89, Cys99-Cys131, and Cys109-Cys141. 2 chondroitin sulfate binding regions span residues 92-99 (KKQFGAEC) and 123-131 (KRALHNADC). A disordered region spans residues 139–168 (KPCGKLTKPKPQAESKKKKKEGKKQEKMLD). The chondroitin sulfate A binding stretch occupies residues 147–168 (PKPQAESKKKKKEGKKQEKMLD).

Belongs to the pleiotrophin family. In terms of assembly, interacts with ALK and NEK6. Interacts with PTPRZ1 (via chondroitin sulfate groups); promotes formation of homooligomers; oligomerization impairs tyrosine phosphatase activity. Forms a complex with PTPRZ1 and CTNNB1; this complex inactivates PTPRZ1 protein tyrosine phosphatase activity through PTN interaction and stimulates tyrosine phosphorylation of CTNNB1. Interacts with ITGB3 and ITGA5. Forms a complex with PTPRZ1 and integrin alpha-V/beta-3 (ITGAV:ITGB3) that stimulates endothelial cell migration through ITGB3 'Tyr-773' phosphorylation. Interacts with SDC3 (via heparan sulfate chains); this interaction mediates the neurite outgrowth-promoting signal from PTN to the cytoskeleton of growing neurites; this interaction mediates osteoblast recruitment. Interacts with GPC2 (via heparan sulfate); this interaction promotes neurite outgrowth through binding of PTN with chondroitin sulfate of proteoglycans, thereby releasing PTPRS of chondroitin sulfate proteoglycans (CSPGs) and leading to binding with heparan sulfate of GPC2. Phosphorylated by NEK6. As to expression, osteoblast and brain. Expressed in the follicular epithelium and granulosa cells of the ovary. Strongly expressed in the uterus of newborn mice, and the degree of expression decreased in one-week-old mice, although the expression continues even in the uteri of adult mice. Expression gradually increases from proestrus to estrus, then decreases sharply, and thereafter gradually increased again. strongly expressed in the cochlea of WT mice 1 week after birth, and then the expression decreased and was undetectable by week 8 after birth. Expressed around the cell soma of osteocytes and apparently captured in the unmineralized interstitial matrix surrounding the cells. Furthermore distributed throughout the intraosseous canalicular porosity, being localized in the unmineralized matrix around the cell processes. Strongly expressed in the innermost layer of the periosteum.

The protein localises to the secreted. Its function is as follows. Secreted growth factor that mediates its signal through cell-surface proteoglycan and non-proteoglycan receptors. Binds cell-surface proteoglycan receptor via their chondroitin sulfate (CS) groups. Thereby regulates many processes like cell proliferation, cell survival, cell growth, cell differentiation and cell migration in several tissues namely neuron and bone. Also plays a role in synaptic plasticity and learning-related behavior by inhibiting long-term synaptic potentiation. Binds PTPRZ1, leading to neutralization of the negative charges of the CS chains of PTPRZ1, inducing PTPRZ1 clustering, thereby causing the dimerization and inactivation of its phosphatase activity leading to increased tyrosine phosphorylation of each of the PTPRZ1 substrates like ALK or AFAP1L2 in order to activate the PI3K-AKT pathway. Through PTPRZ1 binding controls oligodendrocyte precursor cell differentiation by enhancing the phosphorylation of AFAP1L2 in order to activate the PI3K-AKT pathway. Forms a complex with PTPRZ1 and integrin alpha-V/beta-3 (ITGAV:ITGB3) that stimulates endothelial cell migration through SRC dephosphorylation and activation that consequently leads to ITGB3 'Tyr-773' phosphorylation. In adult hippocampus promotes dendritic arborization, spine development, and functional integration and connectivity of newborn granule neurons through ALK by activating AKT signaling pathway. Binds GPC2 and chondroitin sulfate proteoglycans (CSPGs) at the neuron surface, leading to abrogation of binding between PTPRS and CSPGs and neurite outgrowth promotion. Binds SDC3 and mediates bone formation by recruiting and attaching osteoblasts/osteoblast precursors to the sites for new bone deposition. Binds ALK and promotes cell survival and cell proliferation through MAPK pathway activation. Inhibits proliferation and enhances differentiation of neural stem cells by inhibiting FGF2-induced fibroblast growth factor receptor signaling pathway. Mediates regulatory mechanisms in normal hemostasis and in hematopoietic regeneration and in maintaining the balance of myeloid and lymphoid regeneration. In addition may play a role in the female reproductive system, auditory response and the progesterone-induced decidualization pathway. The sequence is that of Pleiotrophin from Mus musculus (Mouse).